The primary structure comprises 186 residues: MEKKRRARINVSLEQLKSLLEKHYSHQIRKRKLEKADILELSVKYMRSLQNSLQGLWPVPRGAEQPSGFRSCLPGVSQLLRRGDEVGSGLRCPLVPESAAGSTMDSAGLGQEAPALFRPCTPAVWAPAPAAGGPRSPPPLLLLPESLPGSSASVPPPQPASSRCAESPGLGLRVWRPWGSPGDDLN.

A bHLH domain is found at 1–49 (MEKKRRARINVSLEQLKSLLEKHYSHQIRKRKLEKADILELSVKYMRSL). An Orange domain is found at 65–99 (QPSGFRSCLPGVSQLLRRGDEVGSGLRCPLVPESA). A disordered region spans residues 128-186 (APAAGGPRSPPPLLLLPESLPGSSASVPPPQPASSRCAESPGLGLRVWRPWGSPGDDLN). Positions 142-153 (LLPESLPGSSAS) are enriched in low complexity. A WRPW motif motif is present at residues 175-178 (WRPW).

As to quaternary structure, transcription repression requires formation of a complex with a corepressor protein of the Groucho/TLE family.

The protein localises to the nucleus. Functionally, transcriptional repressor of genes that require a bHLH protein for their transcription. This Homo sapiens (Human) protein is Transcription factor HES-3 (HES3).